Here is an 889-residue protein sequence, read N- to C-terminus: DNA gyrase subunit A (889 aa).

The region spanning 35–501 (LPDVRDGLKP…GFEDLEDEDL (467 aa)) is the Topo IIA-type catalytic domain. Tyrosine 123 (O-(5'-phospho-DNA)-tyrosine intermediate) is an active-site residue. A GyrA-box motif is present at residues 528–534 (QNRGGRG). Residues 811–889 (KEDAEDETNE…IQQSLDEDEE (79 aa)) form a disordered region. Over residues 813 to 823 (DAEDETNEDEQ) the composition is skewed to acidic residues. Residues 863–875 (DGRIEVRQDFMDR) show a composition bias toward basic and acidic residues. Residues 876 to 889 (VEEDIQQSLDEDEE) are compositionally biased toward acidic residues.

This sequence belongs to the type II topoisomerase GyrA/ParC subunit family. As to quaternary structure, heterotetramer, composed of two GyrA and two GyrB chains. In the heterotetramer, GyrA contains the active site tyrosine that forms a transient covalent intermediate with DNA, while GyrB binds cofactors and catalyzes ATP hydrolysis.

The protein resides in the cytoplasm. It carries out the reaction ATP-dependent breakage, passage and rejoining of double-stranded DNA.. Its function is as follows. A type II topoisomerase that negatively supercoils closed circular double-stranded (ds) DNA in an ATP-dependent manner to modulate DNA topology and maintain chromosomes in an underwound state. Negative supercoiling favors strand separation, and DNA replication, transcription, recombination and repair, all of which involve strand separation. Also able to catalyze the interconversion of other topological isomers of dsDNA rings, including catenanes and knotted rings. Type II topoisomerases break and join 2 DNA strands simultaneously in an ATP-dependent manner. The protein is DNA gyrase subunit A of Staphylococcus aureus.